The chain runs to 276 residues: WIMGHMVNKIEQINEFLDLGANSIEVDITFDNLGYAEYTYHGFPCDCKRWCTNQENVKEYLNALSDITTPGNPKFRKELTLVVFDLKTGGIDANRMYEGGKDFAGKILFDYWKGSENAGRAYIIISVPSIDHYKFMKGFRERFDGSAFKDLLLEKDGWDFSGNDDLDATRTAYQNAGIEALNHIWQSDGITNCIPRGLGRVNKAVSNRDSPDAFINKVYVWTVEKYSSVKDALNADVDGIMTNHPNVINGVLKEDEFKDRFKLATYGDNPWTKFKR.

Histidine 5 is an active-site residue. Mg(2+) is bound by residues glutamate 25 and aspartate 27. Catalysis depends on histidine 41, which acts as the Nucleophile. Cystine bridges form between cysteine 45/cysteine 51 and cysteine 47/cysteine 193. Aspartate 85 serves as a coordination point for Mg(2+).

It belongs to the arthropod phospholipase D family. Class II subfamily. Requires Mg(2+) as cofactor. Expressed by the venom gland.

The protein resides in the secreted. It catalyses the reaction an N-(acyl)-sphingosylphosphocholine = an N-(acyl)-sphingosyl-1,3-cyclic phosphate + choline. The enzyme catalyses an N-(acyl)-sphingosylphosphoethanolamine = an N-(acyl)-sphingosyl-1,3-cyclic phosphate + ethanolamine. It carries out the reaction a 1-acyl-sn-glycero-3-phosphocholine = a 1-acyl-sn-glycero-2,3-cyclic phosphate + choline. The catalysed reaction is a 1-acyl-sn-glycero-3-phosphoethanolamine = a 1-acyl-sn-glycero-2,3-cyclic phosphate + ethanolamine. Functionally, dermonecrotic toxins cleave the phosphodiester linkage between the phosphate and headgroup of certain phospholipids (sphingolipid and lysolipid substrates), forming an alcohol (often choline) and a cyclic phosphate. This toxin acts on sphingomyelin (SM). It may also act on ceramide phosphoethanolamine (CPE), lysophosphatidylcholine (LPC) and lysophosphatidylethanolamine (LPE), but not on lysophosphatidylserine (LPS), and lysophosphatidylglycerol (LPG). It acts by transphosphatidylation, releasing exclusively cyclic phosphate products as second products. Induces dermonecrosis, hemolysis, increased vascular permeability, edema, inflammatory response, and platelet aggregation. The polypeptide is Dermonecrotic toxin LlSicTox-alphaIV1i (Loxosceles laeta (South American recluse spider)).